Reading from the N-terminus, the 354-residue chain is Glutamine synthetase (354 aa).

One can recognise a GS beta-grasp domain in the interval 22–101; that stretch reads IQAEYVWVDG…VLAETYNSDG (80 aa). In terms of domain architecture, GS catalytic spans 108 to 354; sequence FRHHAAKVME…IIVETTLLNA (247 aa).

Belongs to the glutamine synthetase family. As to quaternary structure, homooctamer.

It is found in the cytoplasm. It catalyses the reaction L-glutamate + NH4(+) + ATP = L-glutamine + ADP + phosphate + H(+). This is Glutamine synthetase (GLN1) from Hebeloma cylindrosporum.